The following is a 313-amino-acid chain: MRSPGRPSVTSPPLRGEIVAAFGRHFLVKTADESTLTCVLRGKKSGAACGDWVEIYQTASEQGVIERILPRSALLYRSDLSREKLIAANATQVIIVVAPVPSFSEELINRCLVAAESQQLSVLIVLNKTDLLGPSKVALNGLSLYRELDYTLLPISARNDVKPLLPYLEDNLSVLVGQSGMGKSTIINALVPDAERATGDISPTLDAGRHTTTHARLYHLDRNARIIDSPGIQQFGLQHLSIEAIAWGFREFRPYIGKCKFNNCRHSGEPGCALANAMRESEVSVRRIDLYHKLIASLNTNRIPSSSSRTKIQ.

Residues 82–235 form the CP-type G domain; it reads REKLIAANAT…IIDSPGIQQF (154 aa). GTP-binding positions include 127–130 and 177–185; these read NKTD and GQSGMGKST. Zn(2+) is bound by residues Cys259, Cys264, His266, and Cys272.

It belongs to the TRAFAC class YlqF/YawG GTPase family. RsgA subfamily. Monomer. Associates with 30S ribosomal subunit, binds 16S rRNA. It depends on Zn(2+) as a cofactor.

The protein localises to the cytoplasm. Functionally, one of several proteins that assist in the late maturation steps of the functional core of the 30S ribosomal subunit. Helps release RbfA from mature subunits. May play a role in the assembly of ribosomal proteins into the subunit. Circularly permuted GTPase that catalyzes slow GTP hydrolysis, GTPase activity is stimulated by the 30S ribosomal subunit. The protein is Small ribosomal subunit biogenesis GTPase RsgA of Nitrosospira multiformis (strain ATCC 25196 / NCIMB 11849 / C 71).